The sequence spans 377 residues: Spermidine/putrescine import ATP-binding protein PotA (377 aa).

Residues 18 to 248 (IRLSGISKSF…PKNLFVARFI (231 aa)) enclose the ABC transporter domain. 50 to 57 (GPSGCGKT) is a binding site for ATP.

This sequence belongs to the ABC transporter superfamily. Spermidine/putrescine importer (TC 3.A.1.11.1) family. The complex is composed of two ATP-binding proteins (PotA), two transmembrane proteins (PotB and PotC) and a solute-binding protein (PotD).

It localises to the cell inner membrane. The catalysed reaction is ATP + H2O + polyamine-[polyamine-binding protein]Side 1 = ADP + phosphate + polyamineSide 2 + [polyamine-binding protein]Side 1.. Part of the ABC transporter complex PotABCD involved in spermidine/putrescine import. Responsible for energy coupling to the transport system. The polypeptide is Spermidine/putrescine import ATP-binding protein PotA (Vibrio parahaemolyticus serotype O3:K6 (strain RIMD 2210633)).